The sequence spans 1439 residues: Fanconi anemia group D2 protein (1439 aa).

A Glycyl lysine isopeptide (Lys-Gly) (interchain with G-Cter in ubiquitin) cross-link involves residue lysine 563.

It belongs to the Fanconi anemia protein FANCD2 family. Homodimer; cannot be ubiquitinated and does not bind DNA. Part of a FANCI-FANCD2 heterodimeric complex that binds and scans dsDNA for DNA damage. Interacts directly with FANCE and FANCI. Interacts with USP1 and MEN1. The ubiquitinated form specifically interacts with BRCA1 and BLM. Both the nonubiquitinated and the monoubiquitinated forms interact with BRCA2; this interaction is mediated by phosphorylated FANCG and the complex also includes XCCR3. The ubiquitinated form specifically interacts with MTMR15/FAN1 (via UBZ-type zinc finger), leading to recruit MTMR15/FAN1 to sites of DNA damage. Interacts with DCLRE1B/Apollo. Interacts with POLN. Interacts with UHRF1 and UHRF2; these interactions promote FANCD2 activation. Post-translationally, monoubiquitinated on Lys-563 during S phase and upon genotoxic stress. Deubiquitinated by USP1 as cells enter G2/M, or once DNA repair is completed. Monoubiquitination prevents DNA release from the FANCI-FANCD2 complex. FANCD2 is only ubiquitinated in the FANCI-FANCD2 complex and the monoubiquitination of FANCD2 is promoted by phosphorylation of FANCI. Phosphorylated in response to various genotoxic stresses by ATM and/or ATR.

The protein localises to the nucleus. In terms of biological role, required for maintenance of chromosomal stability. Promotes accurate and efficient pairing of homologs during meiosis. Involved in the repair of DNA double-strand breaks, both by homologous recombination and single-strand annealing. The FANCI-FANCD2 complex binds and scans double-stranded DNA (dsDNA) for DNA damage; this complex stalls at DNA junctions between double-stranded DNA and single-stranded DNA. May participate in S phase and G2 phase checkpoint activation upon DNA damage. Plays a role in preventing breakage and loss of missegregating chromatin at the end of cell division, particularly after replication stress. Required for the targeting, or stabilization, of BLM to non-centromeric abnormal structures induced by replicative stress. Promotes BRCA2/FANCD1 loading onto damaged chromatin. May also be involved in B-cell immunoglobulin isotype switching. The protein is Fanconi anemia group D2 protein of Gallus gallus (Chicken).